A 228-amino-acid polypeptide reads, in one-letter code: Uracil-DNA glycosylase (228 aa).

Residue Asp64 is the Proton acceptor of the active site.

The protein belongs to the uracil-DNA glycosylase (UDG) superfamily. UNG family.

It is found in the cytoplasm. The catalysed reaction is Hydrolyzes single-stranded DNA or mismatched double-stranded DNA and polynucleotides, releasing free uracil.. Functionally, excises uracil residues from the DNA which can arise as a result of misincorporation of dUMP residues by DNA polymerase or due to deamination of cytosine. The polypeptide is Uracil-DNA glycosylase (Yersinia pestis bv. Antiqua (strain Antiqua)).